The chain runs to 611 residues: tRNA uridine 5-carboxymethylaminomethyl modification enzyme MnmG (611 aa).

FAD-binding positions include 8-13 (GAGHAG), Val-120, and Ser-175. 268-282 (GPRYCPSIEDKIVRF) contacts NAD(+). Gln-365 provides a ligand contact to FAD.

This sequence belongs to the MnmG family. As to quaternary structure, homodimer. Heterotetramer of two MnmE and two MnmG subunits. FAD is required as a cofactor.

The protein localises to the cytoplasm. NAD-binding protein involved in the addition of a carboxymethylaminomethyl (cmnm) group at the wobble position (U34) of certain tRNAs, forming tRNA-cmnm(5)s(2)U34. This is tRNA uridine 5-carboxymethylaminomethyl modification enzyme MnmG from Mycoplasmoides gallisepticum (strain R(low / passage 15 / clone 2)) (Mycoplasma gallisepticum).